We begin with the raw amino-acid sequence, 250 residues long: Probable aquaporin TIP-type RB7-5A (250 aa).

The next 2 helical transmembrane spans lie at 20 to 42 and 55 to 77; these read AYVA…AIAY and GLVA…AANI. The short motif at 83 to 85 is the NPA 1 element; the sequence is NPA. Transmembrane regions (helical) follow at residues 97–119, 140–162, and 172–194; these read TILT…CLLL, LQGV…ATAA, and IAPI…FSGG. The NPA 2 signature appears at 197–199; sequence NPA. The chain crosses the membrane as a helical span at residues 215 to 237; that stretch reads WIYWAGPLIGGGLAGFIYGDVFI.

This sequence belongs to the MIP/aquaporin (TC 1.A.8) family. TIP (TC 1.A.8.10) subfamily. Roots.

The protein localises to the vacuole membrane. In terms of biological role, channel protein in tonoplast. These proteins may allow the diffusion of amino acids and/or peptides from the vacuolar compartment to the cytoplasm. The polypeptide is Probable aquaporin TIP-type RB7-5A (Nicotiana tabacum (Common tobacco)).